The sequence spans 293 residues: Nitrogenase iron protein (293 aa).

Position 10–17 (10–17 (GKGGIGKS)) interacts with ATP. Cysteine 98 is a [4Fe-4S] cluster binding site. Arginine 101 is modified (ADP-ribosylarginine; by dinitrogenase reductase ADP-ribosyltransferase). Residue cysteine 133 participates in [4Fe-4S] cluster binding.

The protein belongs to the NifH/BchL/ChlL family. In terms of assembly, homodimer. It depends on [4Fe-4S] cluster as a cofactor. Post-translationally, the reversible ADP-ribosylation of Arg-101 inactivates the nitrogenase reductase and regulates nitrogenase activity.

The catalysed reaction is N2 + 8 reduced [2Fe-2S]-[ferredoxin] + 16 ATP + 16 H2O = H2 + 8 oxidized [2Fe-2S]-[ferredoxin] + 2 NH4(+) + 16 ADP + 16 phosphate + 6 H(+). In terms of biological role, the key enzymatic reactions in nitrogen fixation are catalyzed by the nitrogenase complex, which has 2 components: the iron protein and the molybdenum-iron protein. This is Nitrogenase iron protein from Stutzerimonas stutzeri (strain A1501) (Pseudomonas stutzeri).